A 645-amino-acid chain; its full sequence is Threonine--tRNA ligase (645 aa).

In terms of domain architecture, TGS spans 1–63; it reads MEQINIQFPD…ETDGSIEIVT (63 aa). The interval 242–540 is catalytic; the sequence is DHRKIGKELE…LTEETKGAFP (299 aa). Residues cysteine 336, histidine 387, and histidine 517 each coordinate Zn(2+).

This sequence belongs to the class-II aminoacyl-tRNA synthetase family. In terms of assembly, homodimer. It depends on Zn(2+) as a cofactor.

It is found in the cytoplasm. It carries out the reaction tRNA(Thr) + L-threonine + ATP = L-threonyl-tRNA(Thr) + AMP + diphosphate + H(+). Functionally, catalyzes the attachment of threonine to tRNA(Thr) in a two-step reaction: L-threonine is first activated by ATP to form Thr-AMP and then transferred to the acceptor end of tRNA(Thr). Also edits incorrectly charged L-seryl-tRNA(Thr). The chain is Threonine--tRNA ligase from Staphylococcus aureus (strain NCTC 8325 / PS 47).